A 58-amino-acid polypeptide reads, in one-letter code: UPF0391 membrane protein Gbem_0127 (58 aa).

2 helical membrane passes run 4-24 (WALI…GGIA) and 33-53 (ILFY…LLAG).

It belongs to the UPF0391 family.

It is found in the cell membrane. This is UPF0391 membrane protein Gbem_0127 from Citrifermentans bemidjiense (strain ATCC BAA-1014 / DSM 16622 / JCM 12645 / Bem) (Geobacter bemidjiensis).